We begin with the raw amino-acid sequence, 135 residues long: Large ribosomal subunit protein uL16c (135 aa).

Belongs to the universal ribosomal protein uL16 family. Part of the 50S ribosomal subunit.

It is found in the plastid. Its subcellular location is the chloroplast. This chain is Large ribosomal subunit protein uL16c, found in Oenothera argillicola (Appalachian evening primrose).